Here is a 4644-residue protein sequence, read N- to C-terminus: Cytoplasmic dynein 1 heavy chain 1 (4644 aa).

N-acetylserine is present on S2. The interval 2–1865 (SEPGGGEDGS…SIQMANAKFN (1864 aa)) is stem. 4 coiled-coil regions span residues 48 to 69 (AALE…FLSD), 179 to 200 (SVEK…NIEI), 453 to 476 (AHRK…QLRA), and 541 to 564 (TEAW…RITA). A Phosphoserine modification is found at S68. Residues 446-701 (MVWRINPAHR…NTQEIFDDWA (256 aa)) are interaction with DYNC1I2. The interaction with DYNC1LI2 stretch occupies residues 649-800 (AKQIDRQLTA…EKVEERNTIS (152 aa)). At K1123 the chain carries N6-acetyllysine. Residues 1169–1201 (TYVQSLKRKIKQFEKQVELYRNGQRLLEKQRFQ) are a coiled coil. Position 1228 is a phosphoserine (S1228). Coiled-coil stretches lie at residues 1229–1250 (AIQQ…AVES) and 1355–1371 (RKLR…LKNF). AAA stretches follow at residues 1866 to 2097 (YGFE…VLVS), 2178 to 2450 (EELK…LTRL), 2554 to 2803 (EVET…WVRG), and 2897 to 3166 (VFYE…GGRT). Residues 1904 to 1911 (GPAGTGKT) and 2222 to 2229 (GPSGSGKS) contribute to the ATP site. A disordered region spans residues 2388-2408 (GEDEAQRRRKGKEDEGEEAAS). ATP-binding positions include 2593–2600 (GPPGSGKT) and 2935–2942 (GVSGAGKT). 3 coiled-coil regions span residues 3187-3273 (EKRS…ADKQ), 3394-3498 (AIAQ…KNQM), and 3735-3798 (EFQL…VSQQ). The interval 3187 to 3498 (EKRSELEEQQ…KTSETFKNQM (312 aa)) is stalk. Residue K3478 is modified to N6-acetyllysine. AAA stretches follow at residues 3551–3780 (LSNA…EVTR) and 4003–4219 (AHMF…TVDT). S4160 carries the phosphoserine modification. At K4281 the chain carries N6-acetyllysine. T4364 carries the phosphothreonine modification. S4366 is subject to Phosphoserine.

It belongs to the dynein heavy chain family. In terms of assembly, homodimer. The cytoplasmic dynein 1 complex consists of two catalytic heavy chains (HCs) and a number of non-catalytic subunits presented by intermediate chains (ICs), light intermediate chains (LICs) and light chains (LCs); the composition seems to vary in respect to the IC, LIC and LC composition. The heavy chain homodimer serves as a scaffold for the probable homodimeric assembly of the respective non-catalytic subunits. The ICs and LICs bind directly to the HC dimer and dynein LCs assemble on the IC dimer. Interacts with DYNC1LI1; DYNC1LI1 and DYNC1LI2 bind mutually exclusive to DYNC1H1. Interacts with DYNC1LI2; DYNC1LI1 and DYNC1LI2 bind mutually exclusive to DYNC1H1. Interacts with DYNC1I2. Interacts with BICD2. Interacts with DNALI1.

The protein localises to the cytoplasm. Its subcellular location is the cytoskeleton. Its function is as follows. Cytoplasmic dynein 1 acts as a motor for the intracellular retrograde motility of vesicles and organelles along microtubules. Dynein has ATPase activity; the force-producing power stroke is thought to occur on release of ADP. Plays a role in mitotic spindle assembly and metaphase plate congression. This is Cytoplasmic dynein 1 heavy chain 1 (Dync1h1) from Mus musculus (Mouse).